The following is a 221-amino-acid chain: 7-cyano-7-deazaguanine synthase (221 aa).

7–17 is a binding site for ATP; the sequence is LSGGMDSTTLL. Zn(2+)-binding residues include C183, C191, C194, and C197.

This sequence belongs to the QueC family. Homodimer. Requires Zn(2+) as cofactor.

It catalyses the reaction 7-carboxy-7-deazaguanine + NH4(+) + ATP = 7-cyano-7-deazaguanine + ADP + phosphate + H2O + H(+). Its pathway is purine metabolism; 7-cyano-7-deazaguanine biosynthesis. In terms of biological role, catalyzes the ATP-dependent conversion of 7-carboxy-7-deazaguanine (CDG) to 7-cyano-7-deazaguanine (preQ(0)). The polypeptide is 7-cyano-7-deazaguanine synthase (Caldicellulosiruptor bescii (strain ATCC BAA-1888 / DSM 6725 / KCTC 15123 / Z-1320) (Anaerocellum thermophilum)).